We begin with the raw amino-acid sequence, 249 residues long: Probable phosphatase VV2_1469 (249 aa).

Residues histidine 8, histidine 10, histidine 16, histidine 41, glutamate 74, histidine 102, histidine 132, aspartate 194, and histidine 196 each contribute to the Zn(2+) site.

It belongs to the PHP family. Zn(2+) is required as a cofactor.

In Vibrio vulnificus (strain CMCP6), this protein is Probable phosphatase VV2_1469.